The primary structure comprises 647 residues: Exoribonuclease 2 (647 aa).

Residues 190-519 (REDLTSLPFV…NHRLLKAIIK (330 aa)) form the RNB domain. The region spanning 564 to 646 (EQRFSAEVID…ETRSIVARPV (83 aa)) is the S1 motif domain.

It belongs to the RNR ribonuclease family. RNase II subfamily.

It localises to the cytoplasm. It catalyses the reaction Exonucleolytic cleavage in the 3'- to 5'-direction to yield nucleoside 5'-phosphates.. Functionally, involved in mRNA degradation. Hydrolyzes single-stranded polyribonucleotides processively in the 3' to 5' direction. In Erwinia tasmaniensis (strain DSM 17950 / CFBP 7177 / CIP 109463 / NCPPB 4357 / Et1/99), this protein is Exoribonuclease 2.